The following is a 451-amino-acid chain: MNKMQMLKNEHVLVLGLAKSGYAAASILHEHGVNVTVNDQKPFEENEPAQLLSEKGIDVVCGSHPLRIFEDKDITILIKNPGIPYENVMVQEALRRQIPVWTEIELAYHLTSSPFIGITGSNGKTTTTTLIYEMLKKDSQKTLVAGNIGTVASEVAANADGDEWIVTELSSFQLMGTVEFRPKISLILNIFDAHLDYHHTREEYEKAKQKVFVHQHEDDIAVINLDDPSVVKLAEGSKAKKVFFSVKEPVEHGAFIQHGAIYYMNEHIIDVKDVVLPGEHNQENILAAICVVKNAGCSNDAIVHVLTTFGGVKHRLQFVDTIQSRKFYNDSKATNILATSKALSAFEQPTILLAGGLDRGNEFDELKPFMKHVKGMITFGETAPKFVKLGEELGIHHVKHVDNVEQAVPAAFNISEEEDVILLSPACASWDQHKTFEERGDMFVNAVHMLK.

ATP is bound at residue 120–126 (GSNGKTT).

This sequence belongs to the MurCDEF family.

The protein localises to the cytoplasm. The catalysed reaction is UDP-N-acetyl-alpha-D-muramoyl-L-alanine + D-glutamate + ATP = UDP-N-acetyl-alpha-D-muramoyl-L-alanyl-D-glutamate + ADP + phosphate + H(+). The protein operates within cell wall biogenesis; peptidoglycan biosynthesis. Cell wall formation. Catalyzes the addition of glutamate to the nucleotide precursor UDP-N-acetylmuramoyl-L-alanine (UMA). This chain is UDP-N-acetylmuramoylalanine--D-glutamate ligase, found in Bacillus pumilus (strain SAFR-032).